Here is a 218-residue protein sequence, read N- to C-terminus: Adenylate kinase (218 aa).

ATP is bound at residue 10-15 (GAGKGT). The interval 30–59 (STGDMLRAAVKAGTPLGLEAKKVMDAGGLV) is NMP. AMP-binding positions include Thr-31, Arg-36, 57-59 (GLV), 85-88 (GFPR), and Gln-92. The LID stretch occupies residues 122–159 (GRRVHPASGRVYHTKYNPPKVEGKDDETGDELVQRDDD). ATP-binding positions include Arg-123 and 132 to 133 (VY). Positions 139 to 160 (PPKVEGKDDETGDELVQRDDDQ) are disordered. AMP is bound by residues Arg-156 and Arg-167. Gly-203 contributes to the ATP binding site.

Belongs to the adenylate kinase family. As to quaternary structure, monomer.

It localises to the cytoplasm. The enzyme catalyses AMP + ATP = 2 ADP. It functions in the pathway purine metabolism; AMP biosynthesis via salvage pathway; AMP from ADP: step 1/1. Catalyzes the reversible transfer of the terminal phosphate group between ATP and AMP. Plays an important role in cellular energy homeostasis and in adenine nucleotide metabolism. This Alcanivorax borkumensis (strain ATCC 700651 / DSM 11573 / NCIMB 13689 / SK2) protein is Adenylate kinase.